Consider the following 155-residue polypeptide: Transcriptional repressor NrdR (155 aa).

Positions 1 to 11 (MECPNCHQNAS) are enriched in polar residues. Residues 1-22 (MECPNCHQNASRVIDSRPSDEN) are disordered. The segment at 3–34 (CPNCHQNASRVIDSRPSDENRAIRRRRECENC) is a zinc-finger region. An ATP-cone domain is found at 49–139 (LLVVKNDGTR…IYREFKDMSS (91 aa)).

Belongs to the NrdR family. It depends on Zn(2+) as a cofactor.

Negatively regulates transcription of bacterial ribonucleotide reductase nrd genes and operons by binding to NrdR-boxes. In Lactobacillus acidophilus (strain ATCC 700396 / NCK56 / N2 / NCFM), this protein is Transcriptional repressor NrdR.